We begin with the raw amino-acid sequence, 912 residues long: Protein translocase subunit SecA (912 aa).

Residues Gln87, 105–109 (GEGKT), and Asp509 each bind ATP. Basic and acidic residues predominate over residues 847–859 (RERAVSQPVHEDA). Positions 847–912 (RERAVSQPVH…KYKHCHGKLN (66 aa)) are disordered. A compositionally biased stretch (acidic residues) spans 867 to 878 (AESEEASGESAD). A compositionally biased stretch (basic and acidic residues) spans 881-892 (QPVRRDGPKVGR). Positions 896, 898, 907, and 908 each coordinate Zn(2+). Over residues 902–912 (KKYKHCHGKLN) the composition is skewed to basic residues.

The protein belongs to the SecA family. In terms of assembly, monomer and homodimer. Part of the essential Sec protein translocation apparatus which comprises SecA, SecYEG and auxiliary proteins SecDF-YajC and YidC. Requires Zn(2+) as cofactor.

It is found in the cell inner membrane. Its subcellular location is the cytoplasm. The enzyme catalyses ATP + H2O + cellular proteinSide 1 = ADP + phosphate + cellular proteinSide 2.. Its function is as follows. Part of the Sec protein translocase complex. Interacts with the SecYEG preprotein conducting channel. Has a central role in coupling the hydrolysis of ATP to the transfer of proteins into and across the cell membrane, serving both as a receptor for the preprotein-SecB complex and as an ATP-driven molecular motor driving the stepwise translocation of polypeptide chains across the membrane. This is Protein translocase subunit SecA from Chromohalobacter salexigens (strain ATCC BAA-138 / DSM 3043 / CIP 106854 / NCIMB 13768 / 1H11).